The following is a 529-amino-acid chain: RE1-silencing transcription factor B (529 aa).

The segment at 156 to 178 (FRCKPCQYKAESEEEFVHHIKIH) adopts a C2H2-type 1 zinc-finger fold. Positions 188-210 (SNKKAQGNEADSSISEESDVSKG) are disordered. 7 C2H2-type zinc fingers span residues 212 to 234 (IQCD…LKHH), 244 to 266 (YKCT…LRNH), 272 to 294 (YTCS…IRTH), 300 to 322 (YQCI…MRTH), 328 to 351 (FKCE…RQVH), 357 to 379 (LTCP…VELH), and 385 to 408 (FLCP…KSRH). Residues 484 to 529 (LSSTQKKIKTSDARPEKILDKSRKSSCVKRKSDLLENSNDTQTSTV) are disordered. The segment covering 492–506 (KTSDARPEKILDKSR) has biased composition (basic and acidic residues). Polar residues predominate over residues 518–529 (LENSNDTQTSTV).

Its subcellular location is the nucleus. The protein resides in the cytoplasm. In terms of biological role, transcriptional repressor which binds neuron-restrictive silencer element (NRSE) and represses neuronal gene transcription in non-neuronal cells. Plays a role in the early development of the nervous system and is required for proper patterning of the neuroectoderm during gastrulation. This involves the correct speciation of the neuroepithelial domain and adequate development of the non-neural ectoderm. The chain is RE1-silencing transcription factor B (rest-b) from Xenopus laevis (African clawed frog).